Consider the following 162-residue polypeptide: MCKRFKFLLAVSALFISITVVLAGCGGSSVPYKKDDTYKDSKDNFITITAENEWRVKGSQNSEANYKVESTEYKGDSHSVVAISVKEKINGSDPLLVVNDYHYYILSPRENGFSLTPIGTSHPNSAQWKEFQEGFKGANDKEEFLKKEVANVNKQNIFKKTN.

Residues 1–24 form the signal peptide; that stretch reads MCKRFKFLLAVSALFISITVVLAG. Cys25 carries N-palmitoyl cysteine lipidation. Cys25 is lipidated: S-diacylglycerol cysteine.

Its subcellular location is the cell membrane. This is an uncharacterized protein from Bacillus anthracis.